The following is a 190-amino-acid chain: UPF0301 protein Rmet_2743 (190 aa).

Belongs to the UPF0301 (AlgH) family.

The protein is UPF0301 protein Rmet_2743 of Cupriavidus metallidurans (strain ATCC 43123 / DSM 2839 / NBRC 102507 / CH34) (Ralstonia metallidurans).